A 61-amino-acid chain; its full sequence is Large ribosomal subunit protein uL30 (61 aa).

The protein belongs to the universal ribosomal protein uL30 family. In terms of assembly, part of the 50S ribosomal subunit.

The chain is Large ribosomal subunit protein uL30 from Francisella tularensis subsp. tularensis (strain FSC 198).